The primary structure comprises 365 residues: Histidinol-phosphate aminotransferase (365 aa).

A disordered region spans residues 1–22; the sequence is MSRPVPNPGILDIAPYTPGKSP. Lys-221 is modified (N6-(pyridoxal phosphate)lysine).

It belongs to the class-II pyridoxal-phosphate-dependent aminotransferase family. Histidinol-phosphate aminotransferase subfamily. In terms of assembly, homodimer. It depends on pyridoxal 5'-phosphate as a cofactor.

It catalyses the reaction L-histidinol phosphate + 2-oxoglutarate = 3-(imidazol-4-yl)-2-oxopropyl phosphate + L-glutamate. It functions in the pathway amino-acid biosynthesis; L-histidine biosynthesis; L-histidine from 5-phospho-alpha-D-ribose 1-diphosphate: step 7/9. The chain is Histidinol-phosphate aminotransferase from Nitrobacter winogradskyi (strain ATCC 25391 / DSM 10237 / CIP 104748 / NCIMB 11846 / Nb-255).